Consider the following 629-residue polypeptide: Probable potassium transport system protein Kup 3 (629 aa).

A run of 12 helical transmembrane segments spans residues leucine 20–phenylalanine 40, valine 61–leucine 81, proline 106–threonine 126, proline 143–isoleucine 163, isoleucine 171–alanine 191, phenylalanine 212–threonine 232, tryptophan 253–leucine 273, phenylalanine 291–isoleucine 311, isoleucine 343–phenylalanine 363, alanine 372–leucine 392, isoleucine 400–alanine 420, and phenylalanine 425–isoleucine 445.

It belongs to the HAK/KUP transporter (TC 2.A.72) family.

Its subcellular location is the cell inner membrane. It catalyses the reaction K(+)(in) + H(+)(in) = K(+)(out) + H(+)(out). Functionally, transport of potassium into the cell. Likely operates as a K(+):H(+) symporter. This Legionella pneumophila (strain Lens) protein is Probable potassium transport system protein Kup 3.